The following is a 165-amino-acid chain: Xanthine-guanine phosphoribosyltransferase (165 aa).

5-phospho-alpha-D-ribose 1-diphosphate-binding positions include 41 to 42 (RG) and 98 to 106 (DDLTDTGKT). A Mg(2+)-binding site is contributed by Asp99. Guanine contacts are provided by Asp102 and Ile145. Xanthine contacts are provided by Asp102 and Ile145. GMP contacts are provided by residues 102–106 (DTGKT) and 144–145 (WI).

The protein belongs to the purine/pyrimidine phosphoribosyltransferase family. XGPT subfamily. As to quaternary structure, homotetramer. It depends on Mg(2+) as a cofactor.

Its subcellular location is the cell inner membrane. The catalysed reaction is GMP + diphosphate = guanine + 5-phospho-alpha-D-ribose 1-diphosphate. The enzyme catalyses XMP + diphosphate = xanthine + 5-phospho-alpha-D-ribose 1-diphosphate. It catalyses the reaction IMP + diphosphate = hypoxanthine + 5-phospho-alpha-D-ribose 1-diphosphate. It participates in purine metabolism; GMP biosynthesis via salvage pathway; GMP from guanine: step 1/1. It functions in the pathway purine metabolism; XMP biosynthesis via salvage pathway; XMP from xanthine: step 1/1. Its function is as follows. Purine salvage pathway enzyme that catalyzes the transfer of the ribosyl-5-phosphate group from 5-phospho-alpha-D-ribose 1-diphosphate (PRPP) to the N9 position of the 6-oxopurines guanine and xanthine to form the corresponding ribonucleotides GMP (guanosine 5'-monophosphate) and XMP (xanthosine 5'-monophosphate), with the release of PPi. To a lesser extent, also acts on hypoxanthine. The chain is Xanthine-guanine phosphoribosyltransferase from Rhizobium meliloti (strain 1021) (Ensifer meliloti).